Consider the following 128-residue polypeptide: Iron-sulfur cluster insertion protein ErpA 1 (128 aa).

Iron-sulfur cluster-binding residues include C47, C111, and C113.

Belongs to the HesB/IscA family. In terms of assembly, homodimer. Requires iron-sulfur cluster as cofactor.

In terms of biological role, required for insertion of 4Fe-4S clusters for at least IspG. The protein is Iron-sulfur cluster insertion protein ErpA 1 of Methylococcus capsulatus (strain ATCC 33009 / NCIMB 11132 / Bath).